The primary structure comprises 226 residues: ATP synthase F(0) complex subunit a (226 aa).

Transmembrane regions (helical) follow at residues 6–26 (FASF…IVLF), 68–88 (WALM…LGLL), 97–117 (QLSM…ITGF), 138–158 (IPML…ALAV), 164–184 (ITAG…LMSI), and 189–209 (ALIT…VAMI).

The protein belongs to the ATPase A chain family. Component of the ATP synthase complex composed at least of ATP5F1A/subunit alpha, ATP5F1B/subunit beta, ATP5MC1/subunit c (homooctomer), MT-ATP6/subunit a, MT-ATP8/subunit 8, ATP5ME/subunit e, ATP5MF/subunit f, ATP5MG/subunit g, ATP5MK/subunit k, ATP5MJ/subunit j, ATP5F1C/subunit gamma, ATP5F1D/subunit delta, ATP5F1E/subunit epsilon, ATP5PF/subunit F6, ATP5PB/subunit b, ATP5PD/subunit d, ATP5PO/subunit OSCP. ATP synthase complex consists of a soluble F(1) head domain (subunits alpha(3) and beta(3)) - the catalytic core - and a membrane F(0) domain - the membrane proton channel (subunits c, a, 8, e, f, g, k and j). These two domains are linked by a central stalk (subunits gamma, delta, and epsilon) rotating inside the F1 region and a stationary peripheral stalk (subunits F6, b, d, and OSCP). Interacts with DNAJC30; interaction is direct.

It localises to the mitochondrion inner membrane. It catalyses the reaction H(+)(in) = H(+)(out). Subunit a, of the mitochondrial membrane ATP synthase complex (F(1)F(0) ATP synthase or Complex V) that produces ATP from ADP in the presence of a proton gradient across the membrane which is generated by electron transport complexes of the respiratory chain. ATP synthase complex consist of a soluble F(1) head domain - the catalytic core - and a membrane F(1) domain - the membrane proton channel. These two domains are linked by a central stalk rotating inside the F(1) region and a stationary peripheral stalk. During catalysis, ATP synthesis in the catalytic domain of F(1) is coupled via a rotary mechanism of the central stalk subunits to proton translocation. With the subunit c (ATP5MC1), forms the proton-conducting channel in the F(0) domain, that contains two crucial half-channels (inlet and outlet) that facilitate proton movement from the mitochondrial intermembrane space (IMS) into the matrix. Protons are taken up via the inlet half-channel and released through the outlet half-channel, following a Grotthuss mechanism. The chain is ATP synthase F(0) complex subunit a from Ovis aries (Sheep).